The primary structure comprises 344 residues: Glycerol-3-phosphate dehydrogenase [NAD(P)+] (344 aa).

Residues serine 11, tryptophan 12, histidine 32, arginine 33, and lysine 105 each contribute to the NADPH site. Residues lysine 105, glycine 135, and serine 137 each coordinate sn-glycerol 3-phosphate. An NADPH-binding site is contributed by alanine 139. The sn-glycerol 3-phosphate site is built by lysine 190, aspartate 243, serine 253, arginine 254, and asparagine 255. The active-site Proton acceptor is lysine 190. Residue arginine 254 participates in NADPH binding. Residues valine 278 and glutamate 280 each coordinate NADPH.

It belongs to the NAD-dependent glycerol-3-phosphate dehydrogenase family.

The protein localises to the cytoplasm. The catalysed reaction is sn-glycerol 3-phosphate + NAD(+) = dihydroxyacetone phosphate + NADH + H(+). It carries out the reaction sn-glycerol 3-phosphate + NADP(+) = dihydroxyacetone phosphate + NADPH + H(+). Its pathway is membrane lipid metabolism; glycerophospholipid metabolism. Catalyzes the reduction of the glycolytic intermediate dihydroxyacetone phosphate (DHAP) to sn-glycerol 3-phosphate (G3P), the key precursor for phospholipid synthesis. The chain is Glycerol-3-phosphate dehydrogenase [NAD(P)+] from Oceanobacillus iheyensis (strain DSM 14371 / CIP 107618 / JCM 11309 / KCTC 3954 / HTE831).